The following is a 316-amino-acid chain: Tyrosine recombinase XerC (316 aa).

A Core-binding (CB) domain is found at 11–97 (SGLRKPLDQF…SLRSFFDFLI (87 aa)). One can recognise a Tyr recombinase domain in the interval 118–298 (PLPKNLDVDE…DFQHLADVYD (181 aa)). Active-site residues include arginine 157, lysine 181, histidine 250, arginine 253, and histidine 276. Tyrosine 285 acts as the O-(3'-phospho-DNA)-tyrosine intermediate in catalysis.

Belongs to the 'phage' integrase family. XerC subfamily. Forms a cyclic heterotetrameric complex composed of two molecules of XerC and two molecules of XerD.

It is found in the cytoplasm. Site-specific tyrosine recombinase, which acts by catalyzing the cutting and rejoining of the recombining DNA molecules. The XerC-XerD complex is essential to convert dimers of the bacterial chromosome into monomers to permit their segregation at cell division. It also contributes to the segregational stability of plasmids. In Vibrio vulnificus (strain CMCP6), this protein is Tyrosine recombinase XerC.